The primary structure comprises 831 residues: Translation initiation factor IF-2 (831 aa).

Positions 1-11 (MADEIKKENAP) are enriched in basic and acidic residues. Residues 1–236 (MADEIKKENA…GKHAKKASAL (236 aa)) are disordered. Residues 22–31 (TTVSGTSTTG) are compositionally biased toward low complexity. Composition is skewed to basic and acidic residues over residues 49-150 (DLER…RYAD) and 157-166 (DNGKLDDYSD). Residues 190-200 (RSKNKVVKAKK) are compositionally biased toward basic residues. The span at 201-225 (GGRDDENGNKNERQSDRRNQKDVKG) shows a compositional bias: basic and acidic residues. In terms of domain architecture, tr-type G spans 330-500 (HRAPVVTIMG…LLQSEVLELT (171 aa)). Residues 339–346 (GHVDHGKT) are G1. 339–346 (GHVDHGKT) contacts GTP. Positions 364-368 (GITQH) are G2. The interval 386–389 (DTPG) is G3. GTP contacts are provided by residues 386 to 390 (DTPGH) and 440 to 443 (NKID). Positions 440–443 (NKID) are G4. The segment at 476–478 (SAK) is G5.

Belongs to the TRAFAC class translation factor GTPase superfamily. Classic translation factor GTPase family. IF-2 subfamily.

It localises to the cytoplasm. One of the essential components for the initiation of protein synthesis. Protects formylmethionyl-tRNA from spontaneous hydrolysis and promotes its binding to the 30S ribosomal subunits. Also involved in the hydrolysis of GTP during the formation of the 70S ribosomal complex. The polypeptide is Translation initiation factor IF-2 (Histophilus somni (strain 2336) (Haemophilus somnus)).